The following is a 354-amino-acid chain: L-lactate dehydrogenase (354 aa).

Residues D73 to K78 and R120 each bind NAD(+). R127, N159, and R190 together coordinate substrate. N159 lines the NAD(+) pocket. The Proton acceptor role is filled by H214. T269 contributes to the substrate binding site. The disordered stretch occupies residues H302 to E332.

This sequence belongs to the LDH/MDH superfamily. LDH family. Homotetramer.

It catalyses the reaction (S)-lactate + NAD(+) = pyruvate + NADH + H(+). Its pathway is fermentation; pyruvate fermentation to lactate; (S)-lactate from pyruvate: step 1/1. The polypeptide is L-lactate dehydrogenase (Zea mays (Maize)).